Reading from the N-terminus, the 617-residue chain is UvrABC system protein C (617 aa).

The region spanning 12-91 is the GIY-YIG domain; that stretch reads EKPGVYLMKD…IKKYKPKYNV (80 aa). The region spanning 203–238 is the UVR domain; the sequence is EWLVEKLKEEMQKAADELRFEEAARLRDQIFAIEKI.

Belongs to the UvrC family. As to quaternary structure, interacts with UvrB in an incision complex.

The protein localises to the cytoplasm. The UvrABC repair system catalyzes the recognition and processing of DNA lesions. UvrC both incises the 5' and 3' sides of the lesion. The N-terminal half is responsible for the 3' incision and the C-terminal half is responsible for the 5' incision. This Caldanaerobacter subterraneus subsp. tengcongensis (strain DSM 15242 / JCM 11007 / NBRC 100824 / MB4) (Thermoanaerobacter tengcongensis) protein is UvrABC system protein C.